The following is a 370-amino-acid chain: MASFFARTRRFSLVSLFLLELFTINLIPTTDAQIGICYGMMGNNLPPANEVIALYKANNIKRMRLYDPNQPALNALRDSGIELILGIPNSDLQTLATNQDSARQWVQRNVLNFYPSVKIKYIAVGNEVSPVGGSSWLAQYVLPATQNVYQAIRAQGLHDQIKVTTAIDMTLIGNSFPPSKGSFRSDVRSYLDPFIGYLVYAGAPLLVNVYPYFSHIGNPRDISLPYALFTSPGVMVQDGPNGYQNLFDAMLDSVHAALDNTGIGWVNVVVSESGWPSDGGSATSYDNARIYLDNLIRHVGKGTPRRPWATEAYLFAMFDENQKSPELEKHFGVFYPNKQKKYPFGFGGERRDGEIVEGDFNGTVSLKSDM.

The signal sequence occupies residues 1 to 32; it reads MASFFARTRRFSLVSLFLLELFTINLIPTTDA. Position 33 is a pyrrolidone carboxylic acid (Gln33). Residue Glu127 is the Proton donor of the active site. Glu272 acts as the Nucleophile in catalysis. A propeptide spans 348 to 370 (removed in mature form); the sequence is GERRDGEIVEGDFNGTVSLKSDM. Asn361 carries an N-linked (GlcNAc...) asparagine glycan.

It belongs to the glycosyl hydrolase 17 family. As to expression, constitutively expressed in seedling roots.

It catalyses the reaction Hydrolysis of (1-&gt;3)-beta-D-glucosidic linkages in (1-&gt;3)-beta-D-glucans.. In terms of biological role, implicated in the defense of plants against pathogens. The sequence is that of Glucan endo-1,3-beta-glucosidase from Pisum sativum (Garden pea).